Reading from the N-terminus, the 155-residue chain is RING finger protein 122 (155 aa).

Residues 40 to 60 (VIFGTGIFVFMLSLIFCCYFI) traverse the membrane as a helical segment. The RING-type; atypical zinc finger occupies 93 to 134 (CAVCLEDFKGKDELGVLPCQHAFHRKCLVKWLEVRCVCPMCN).

The protein localises to the golgi apparatus. The protein resides in the endoplasmic reticulum. It is found in the membrane. Functionally, may induce necrosis and apoptosis. May play a role in cell viability. The polypeptide is RING finger protein 122 (Rnf122) (Mus musculus (Mouse)).